The following is a 285-amino-acid chain: Phycobilisome 31.6 kDa linker polypeptide, phycocyanin-associated, rod (285 aa).

In terms of domain architecture, PBS-linker spans 1 to 180 (MPITTAASRL…LYRGYATSDR (180 aa)).

Belongs to the phycobilisome linker protein family.

The protein localises to the cellular thylakoid membrane. Functionally, rod linker protein, associated with phycocyanin. Linker polypeptides determine the state of aggregation and the location of the disk-shaped phycobiliprotein units within the phycobilisome and modulate their spectroscopic properties in order to mediate a directed and optimal energy transfer. In Microchaete diplosiphon (Fremyella diplosiphon), this protein is Phycobilisome 31.6 kDa linker polypeptide, phycocyanin-associated, rod (cpcI3).